We begin with the raw amino-acid sequence, 174 residues long: Shikimate kinase (174 aa).

Position 14–19 (Gly14–Thr19) interacts with ATP. Ser18 contacts Mg(2+). Substrate-binding residues include Asp36, Arg60, and Gly82. Arg120 is an ATP binding site. Arg141 lines the substrate pocket. Arg158 is an ATP binding site.

It belongs to the shikimate kinase family. In terms of assembly, monomer. It depends on Mg(2+) as a cofactor.

Its subcellular location is the cytoplasm. It carries out the reaction shikimate + ATP = 3-phosphoshikimate + ADP + H(+). It functions in the pathway metabolic intermediate biosynthesis; chorismate biosynthesis; chorismate from D-erythrose 4-phosphate and phosphoenolpyruvate: step 5/7. Functionally, catalyzes the specific phosphorylation of the 3-hydroxyl group of shikimic acid using ATP as a cosubstrate. The chain is Shikimate kinase from Buchnera aphidicola subsp. Baizongia pistaciae (strain Bp).